A 183-amino-acid chain; its full sequence is Glutathione-regulated potassium-efflux system ancillary protein KefG (183 aa).

Belongs to the NAD(P)H dehydrogenase (quinone) family. KefG subfamily. As to quaternary structure, interacts with KefB.

Its subcellular location is the cell inner membrane. It catalyses the reaction a quinone + NADH + H(+) = a quinol + NAD(+). The catalysed reaction is a quinone + NADPH + H(+) = a quinol + NADP(+). Its function is as follows. Regulatory subunit of a potassium efflux system that confers protection against electrophiles. Required for full activity of KefB. The sequence is that of Glutathione-regulated potassium-efflux system ancillary protein KefG from Salmonella paratyphi C (strain RKS4594).